Consider the following 184-residue polypeptide: Large ribosomal subunit protein uL6 (184 aa).

It belongs to the universal ribosomal protein uL6 family. In terms of assembly, part of the 50S ribosomal subunit.

Its function is as follows. This protein binds to the 23S rRNA, and is important in its secondary structure. It is located near the subunit interface in the base of the L7/L12 stalk, and near the tRNA binding site of the peptidyltransferase center. This chain is Large ribosomal subunit protein uL6, found in Mycoplasma pneumoniae (strain ATCC 29342 / M129 / Subtype 1) (Mycoplasmoides pneumoniae).